The chain runs to 233 residues: UPF0758 protein TTE0897 (233 aa).

Residues 108–230 (SVTSPEDVIN…GISLKEKGYY (123 aa)) enclose the MPN domain. Positions 179, 181, and 192 each coordinate Zn(2+). Positions 179–192 (HNHPSGDPTPSRED) match the JAMM motif motif.

The protein belongs to the UPF0758 family.

The polypeptide is UPF0758 protein TTE0897 (Caldanaerobacter subterraneus subsp. tengcongensis (strain DSM 15242 / JCM 11007 / NBRC 100824 / MB4) (Thermoanaerobacter tengcongensis)).